The chain runs to 1238 residues: MAEPDISSSETLTELQQLRLLYFFCFYHAAPFNVKTLVHSLIPPGALSYLLSTYDILRPWLMALRVREGPVNDISTIVQLYEEIVKTGFFINPPPFESYSQTLVARITTLGRPKLQVQQEAQSEVYQRASTNTQQQVSNVSHGNFKPNSSVNTEPNTSILSNSKYAGIKPFDFQSSSQNPGLVCEQKTFYQHQFRPFSNLPSNKSSPVKHVSPNVKNNSKKTASSVNSNHSSIPSSITKSNISSLDVYGSEKLISSGSQQPGHGMVQTTSDKVNASASLYDRSPSKKDITSSRNTSSYNLGSMRNPSTLKNAAHANPFEGLRFQGSSAVLKEGLNSTVKKTFFDNLNSEKVCPSVSPFLTPDNIASSILYSTASFSRSKPDRPRLNLSLELKLMQNELNKGQLKKQFKGDLRNLADWNNLSLVSSKFPSLPITNLRPDGSFLKHRRFNEEIAYNRQTLEKAIKQLDLSPDKVIQLREQNGVAVNGRVCYPTRNKHSEISAQSSSSLGVTKSLASEVYSSSTVDTISKLNTDKDNYLIKSKKEPIQQKSVSSETTLVKPSSTSSYIDTTNNVLKTNSSFKSSGLTSGPRNEKELLPEGIPTSHNNSETQAQTADVSNIAASADGIYNSDQEKPPEKLDVTKRAFGREIENSNEKELLTSTFLSPSAESQVCLAEIKTIRPGLVPKKQFSVDQNNVISDNTDCSLPKPSNSKLSSISSDGDASSNRMAVPDKSPFVHAAPNSKALTKDSFSTHISVSSLLHSDNEISPIDSTRKDYFTSKDSNLQTLKEDASSTKQAKDSGTNDFDKLISGNDVSKNNSGEEQSRSALKPLISGKLSSCESINLTKDISTVKRKEYFGIESTSSKQPFHDTGSIKIPAKRSFDTIDKDFRSSNIPFADKIKEDGGDKNVISSIHITTELPKSMPVEVPTNAGAQSDQSNVVDSESLNLRENISTSVADVSLSQAGNEAVLSKKACKPLVLIDPFEEKVLKAFNMLSKGYAEYRCQWEGCLANLHSLENFIKHVLLLHHPKSCSVVKCLWASCDMVLPSEEFEMHLRGHLNNIRLNCEVSNCKKCFSNYEDMFKHLQHSHLPFKFTPESFIKIRNGNVKEEARRTRNAYTQKSGEVECFMETCTPIAKPAPANWYPVPPPGFNSSLLSRLTQSNQSKDKIIAALAKRNVYKSFAGLYDSKGKNDNTGYDFDSNYARVGRHGSFILPVSKSVPTPSLLIEGSIVQRKNIKIE.

Disordered regions lie at residues 133 to 156 (TQQQVSNVSHGNFKPNSSVNTEPN), 196 to 237 (PFSN…PSSI), 277 to 303 (ASLYDRSPSKKDITSSRNTSSYNLGSM), 546 to 568 (QKSVSSETTLVKPSSTSSYIDTT), 696 to 735 (SDNTDCSLPKPSNSKLSSISSDGDASSNRMAVPDKSPFVH), and 784 to 824 (TLKE…QSRS). Residues 214-223 (NVKNNSKKTA) show a composition bias toward polar residues. Over residues 224 to 237 (SSVNSNHSSIPSSI) the composition is skewed to low complexity. Positions 291-303 (SSRNTSSYNLGSM) are enriched in polar residues. A compositionally biased stretch (low complexity) spans 702-723 (SLPKPSNSKLSSISSDGDASSN). The span at 785-796 (LKEDASSTKQAK) shows a compositional bias: basic and acidic residues. A compositionally biased stretch (polar residues) spans 810–819 (NDVSKNNSGE). The segment at 1062 to 1087 (LNCEVSNCKKCFSNYEDMFKHLQHSH) adopts a C2H2-type zinc-finger fold.

As to quaternary structure, interacts with clr3.

It localises to the nucleus. The protein localises to the chromosome. The protein resides in the centromere. Its subcellular location is the telomere. Its function is as follows. Regulates silencing of the mat2 and mat3 loci. Organizes the chromatin structure of the mating-type region where it also participates in establishing the 'cold spot' for recombination. Required for proper positioning of nucleosomes at heterochromatic loci and for transcriptional gene silencing (TGS) function of the Snf2/Hdac-containing repressor complex (SHREC). The protein is Cryptic loci regulator protein 1 (clr1) of Schizosaccharomyces pombe (strain 972 / ATCC 24843) (Fission yeast).